The chain runs to 62 residues: Amolopin-P2 (62 aa).

The first 22 residues, 1 to 22, serve as a signal peptide directing secretion; the sequence is MFTLKKSLLLLFFLGTISLSLC. Residues 23 to 44 constitute a propeptide that is removed on maturation; the sequence is EQERGADEEENGGEVTEQEVKR.

Belongs to the frog skin active peptide (FSAP) family. Amolopin subfamily. Expressed by the skin glands.

The protein resides in the secreted. In terms of biological role, antimicrobial peptide with activity against Gram-positive bacteria. Has been tested against S.aureus (MIC=37.5 ug/mL), against B.pumilus (MIC=75.0 ug/mL), B.cereus (no activity detected). Does not show activity against Gram-negative bacteria (E.coli, B.dysenteriae, A.calcoaceticus, P.aeruginosa) and fungi (C.albicans). Does not show hemolytic activity against rabbit erythrocytes. The sequence is that of Amolopin-P2 from Amolops loloensis (Lolokou Sucker Frog).